We begin with the raw amino-acid sequence, 378 residues long: UDP-N-acetylglucosamine 2-epimerase (378 aa).

Residue histidine 214 is part of the active site.

It belongs to the UDP-N-acetylglucosamine 2-epimerase family.

It catalyses the reaction UDP-N-acetyl-alpha-D-glucosamine = UDP-N-acetyl-alpha-D-mannosamine. Its pathway is bacterial outer membrane biogenesis; LPS O-antigen biosynthesis. The sequence is that of UDP-N-acetylglucosamine 2-epimerase (rfbC) from Salmonella borreze.